Reading from the N-terminus, the 471-residue chain is UDP-N-acetylmuramate--L-alanine ligase (471 aa).

Residue 114-120 (GTHGKTT) participates in ATP binding.

Belongs to the MurCDEF family.

It localises to the cytoplasm. The enzyme catalyses UDP-N-acetyl-alpha-D-muramate + L-alanine + ATP = UDP-N-acetyl-alpha-D-muramoyl-L-alanine + ADP + phosphate + H(+). Its pathway is cell wall biogenesis; peptidoglycan biosynthesis. Functionally, cell wall formation. The polypeptide is UDP-N-acetylmuramate--L-alanine ligase (Agrobacterium fabrum (strain C58 / ATCC 33970) (Agrobacterium tumefaciens (strain C58))).